A 650-amino-acid polypeptide reads, in one-letter code: Protein kinase domain-containing protein ppk38 (650 aa).

The region spanning 33 to 315 is the Protein kinase domain; sequence VTVKRYLAEG…MRNVPIHIYD (283 aa). 3 disordered regions span residues 344-442, 517-571, and 591-616; these read IHQS…PTTP, KVAA…PTNM, and RRVS…EKPM. Composition is skewed to polar residues over residues 369-415 and 533-554; these read NVNS…NFRV and SVEN…SSNA.

This chain is Protein kinase domain-containing protein ppk38 (ppk38), found in Schizosaccharomyces pombe (strain 972 / ATCC 24843) (Fission yeast).